The following is a 183-amino-acid chain: Transmembrane protein 154 (183 aa).

The N-terminal stretch at 1–22 (MQAPRAALVFALVIALVPVGRG) is a signal peptide. Topologically, residues 23 to 75 (NYEELENSGDTTVESERPNKVTIPSTFAAVTIKETLNANINSTNFAPDENQLE) are extracellular. Residues 76 to 96 (FILMVLIPLILLVLLLLSVVF) traverse the membrane as a helical segment. At 97–183 (LATYYKRKRT…SNHNPSDSES (87 aa)) the chain is on the cytoplasmic side. The interval 163-183 (ECLPTLKEEKESNHNPSDSES) is disordered. At S179 the chain carries Phosphoserine.

The protein localises to the membrane. The protein is Transmembrane protein 154 (TMEM154) of Homo sapiens (Human).